The following is a 316-amino-acid chain: 4-hydroxy-3-methylbut-2-enyl diphosphate reductase (316 aa).

Position 17 (Cys17) interacts with [4Fe-4S] cluster. Positions 46 and 79 each coordinate (2E)-4-hydroxy-3-methylbut-2-enyl diphosphate. Dimethylallyl diphosphate is bound by residues His46 and His79. Isopentenyl diphosphate-binding residues include His46 and His79. Cys101 contacts [4Fe-4S] cluster. (2E)-4-hydroxy-3-methylbut-2-enyl diphosphate is bound at residue His129. Residue His129 coordinates dimethylallyl diphosphate. His129 is an isopentenyl diphosphate binding site. Glu131 serves as the catalytic Proton donor. Thr170 contacts (2E)-4-hydroxy-3-methylbut-2-enyl diphosphate. Cys200 provides a ligand contact to [4Fe-4S] cluster. Positions 228, 229, 230, and 273 each coordinate (2E)-4-hydroxy-3-methylbut-2-enyl diphosphate. Residues Ser228, Ser229, Asn230, and Ser273 each contribute to the dimethylallyl diphosphate site. Isopentenyl diphosphate contacts are provided by Ser228, Ser229, Asn230, and Ser273.

The protein belongs to the IspH family. [4Fe-4S] cluster serves as cofactor.

The enzyme catalyses isopentenyl diphosphate + 2 oxidized [2Fe-2S]-[ferredoxin] + H2O = (2E)-4-hydroxy-3-methylbut-2-enyl diphosphate + 2 reduced [2Fe-2S]-[ferredoxin] + 2 H(+). It carries out the reaction dimethylallyl diphosphate + 2 oxidized [2Fe-2S]-[ferredoxin] + H2O = (2E)-4-hydroxy-3-methylbut-2-enyl diphosphate + 2 reduced [2Fe-2S]-[ferredoxin] + 2 H(+). Its pathway is isoprenoid biosynthesis; dimethylallyl diphosphate biosynthesis; dimethylallyl diphosphate from (2E)-4-hydroxy-3-methylbutenyl diphosphate: step 1/1. It functions in the pathway isoprenoid biosynthesis; isopentenyl diphosphate biosynthesis via DXP pathway; isopentenyl diphosphate from 1-deoxy-D-xylulose 5-phosphate: step 6/6. Functionally, catalyzes the conversion of 1-hydroxy-2-methyl-2-(E)-butenyl 4-diphosphate (HMBPP) into a mixture of isopentenyl diphosphate (IPP) and dimethylallyl diphosphate (DMAPP). Acts in the terminal step of the DOXP/MEP pathway for isoprenoid precursor biosynthesis. This is 4-hydroxy-3-methylbut-2-enyl diphosphate reductase from Roseobacter denitrificans (strain ATCC 33942 / OCh 114) (Erythrobacter sp. (strain OCh 114)).